A 426-amino-acid chain; its full sequence is Chaperone SurA (426 aa).

Positions 1–13 (MLGALFLGTAANA) are cleaved as a signal peptide. 2 consecutive PpiC domains span residues 164-265 (SEEL…KLLE) and 274-373 (RDEV…EVLG).

The protein localises to the periplasm. It carries out the reaction [protein]-peptidylproline (omega=180) = [protein]-peptidylproline (omega=0). In terms of biological role, chaperone involved in the correct folding and assembly of outer membrane proteins. Recognizes specific patterns of aromatic residues and the orientation of their side chains, which are found more frequently in integral outer membrane proteins. May act in both early periplasmic and late outer membrane-associated steps of protein maturation. The sequence is that of Chaperone SurA from Pseudomonas fluorescens (strain Pf0-1).